The sequence spans 324 residues: Dermonecrotic toxin Hl-PLD1 (324 aa).

The signal sequence occupies residues 1 to 35 (MAHCYYNSKRGCNRVMKTVALVVLISTVMVEESRG). Residue histidine 50 is part of the active site. Mg(2+)-binding residues include glutamate 70 and aspartate 72. The active-site Nucleophile is the histidine 86. 2 cysteine pairs are disulfide-bonded: cysteine 90–cysteine 96 and cysteine 92–cysteine 236. Residue aspartate 130 participates in Mg(2+) binding.

This sequence belongs to the arthropod phospholipase D family. Class II subfamily. It depends on Mg(2+) as a cofactor. As to expression, expressed by the venom gland.

The protein localises to the secreted. The enzyme catalyses an N-(acyl)-sphingosylphosphocholine = an N-(acyl)-sphingosyl-1,3-cyclic phosphate + choline. The catalysed reaction is an N-(acyl)-sphingosylphosphoethanolamine = an N-(acyl)-sphingosyl-1,3-cyclic phosphate + ethanolamine. It carries out the reaction a 1-acyl-sn-glycero-3-phosphocholine = a 1-acyl-sn-glycero-2,3-cyclic phosphate + choline. It catalyses the reaction a 1-acyl-sn-glycero-3-phosphoethanolamine = a 1-acyl-sn-glycero-2,3-cyclic phosphate + ethanolamine. Dermonecrotic toxins cleave the phosphodiester linkage between the phosphate and headgroup of certain phospholipids (sphingolipid and lysolipid substrates), forming an alcohol (often choline) and a cyclic phosphate. This toxin acts on sphingomyelin (SM) with a high activity. It may also act on ceramide phosphoethanolamine (CPE), lysophosphatidylcholine (LPC) and lysophosphatidylethanolamine (LPE), but not on lysophosphatidylserine (LPS), and lysophosphatidylglycerol (LPG). It acts by transphosphatidylation, releasing exclusively cyclic phosphate products as second products. In vivo, shows dermonecrotic activity when intradermally injected into rabbit skin and is lethal to mice. Induces increased vascular permeability, edema, inflammatory response, and platelet aggregation. Does not show hemolytic activity (at up to 50 ug). In Hemiscorpius lepturus (Scorpion), this protein is Dermonecrotic toxin Hl-PLD1.